A 404-amino-acid chain; its full sequence is Probable tRNA sulfurtransferase (404 aa).

Positions 60-165 (QPVAESLKQI…EEAAYISYET (106 aa)) constitute a THUMP domain. ATP contacts are provided by residues 183–184 (ML), 208–209 (HF), Arg-265, Gly-287, and Gln-296.

It belongs to the ThiI family.

It is found in the cytoplasm. The catalysed reaction is [ThiI sulfur-carrier protein]-S-sulfanyl-L-cysteine + a uridine in tRNA + 2 reduced [2Fe-2S]-[ferredoxin] + ATP + H(+) = [ThiI sulfur-carrier protein]-L-cysteine + a 4-thiouridine in tRNA + 2 oxidized [2Fe-2S]-[ferredoxin] + AMP + diphosphate. The enzyme catalyses [ThiS sulfur-carrier protein]-C-terminal Gly-Gly-AMP + S-sulfanyl-L-cysteinyl-[cysteine desulfurase] + AH2 = [ThiS sulfur-carrier protein]-C-terminal-Gly-aminoethanethioate + L-cysteinyl-[cysteine desulfurase] + A + AMP + 2 H(+). The protein operates within cofactor biosynthesis; thiamine diphosphate biosynthesis. In terms of biological role, catalyzes the ATP-dependent transfer of a sulfur to tRNA to produce 4-thiouridine in position 8 of tRNAs, which functions as a near-UV photosensor. Also catalyzes the transfer of sulfur to the sulfur carrier protein ThiS, forming ThiS-thiocarboxylate. This is a step in the synthesis of thiazole, in the thiamine biosynthesis pathway. The sulfur is donated as persulfide by IscS. The protein is Probable tRNA sulfurtransferase of Streptococcus gordonii (strain Challis / ATCC 35105 / BCRC 15272 / CH1 / DL1 / V288).